We begin with the raw amino-acid sequence, 459 residues long: Trigger factor (459 aa).

One can recognise a PPIase FKBP-type domain in the interval 166 to 245 (GDFANIDLTA…VNSVKAEELP (80 aa)).

This sequence belongs to the FKBP-type PPIase family. Tig subfamily.

It is found in the cytoplasm. It catalyses the reaction [protein]-peptidylproline (omega=180) = [protein]-peptidylproline (omega=0). Its function is as follows. Involved in protein export. Acts as a chaperone by maintaining the newly synthesized protein in an open conformation. Functions as a peptidyl-prolyl cis-trans isomerase. The sequence is that of Trigger factor from Bifidobacterium longum (strain DJO10A).